A 321-amino-acid chain; its full sequence is Acetyl-coenzyme A carboxylase carboxyl transferase subunit alpha (321 aa).

The CoA carboxyltransferase C-terminal domain maps to 39-293 (RLEVKSQALT…KRALAEALRQ (255 aa)).

This sequence belongs to the AccA family. As to quaternary structure, acetyl-CoA carboxylase is a heterohexamer composed of biotin carboxyl carrier protein (AccB), biotin carboxylase (AccC) and two subunits each of ACCase subunit alpha (AccA) and ACCase subunit beta (AccD).

The protein localises to the cytoplasm. The enzyme catalyses N(6)-carboxybiotinyl-L-lysyl-[protein] + acetyl-CoA = N(6)-biotinyl-L-lysyl-[protein] + malonyl-CoA. It functions in the pathway lipid metabolism; malonyl-CoA biosynthesis; malonyl-CoA from acetyl-CoA: step 1/1. Its function is as follows. Component of the acetyl coenzyme A carboxylase (ACC) complex. First, biotin carboxylase catalyzes the carboxylation of biotin on its carrier protein (BCCP) and then the CO(2) group is transferred by the carboxyltransferase to acetyl-CoA to form malonyl-CoA. The protein is Acetyl-coenzyme A carboxylase carboxyl transferase subunit alpha of Azoarcus sp. (strain BH72).